Consider the following 259-residue polypeptide: MFNLLNTYITSPLDQFEIRTLFGLQSSFIDLSCLNLTTFSLYTIIVLLVITSLYTLTNNNNKIIGSRWLISQEAIYDTIMNMTKGQIGGKNWGLYFPMIFTLFMFIFIANLISMIPYSFALSAHLVFIISLSIVIWLGNTILGLYKHGWVFFSLFVPAGTPLPLVPLLVIIETLSYFARAISLGLRLGSNILAGHLLMVILAGLTFNFMLINLFTLVFGFVPLAMILAIMMLEFAIGIIQGYVWAILTASYLKDAVYLH.

A propeptide spans 1 to 10 (MFNLLNTYIT) (removed in mature form). The next 6 helical transmembrane spans lie at 36-56 (LTTFSLYTIIVLLVITSLYTL), 92-112 (WGLYFPMIFTLFMFIFIANLI), 125-145 (LVFIISLSIVIWLGNTILGLY), 150-170 (VFFSLFVPAGTPLPLVPLLVI), 191-211 (ILAGHLLMVILAGLTFNFMLI), and 216-236 (LVFGFVPLAMILAIMMLEFAI).

The protein belongs to the ATPase A chain family. As to quaternary structure, F-type ATPases have 2 components, CF(1) - the catalytic core - and CF(0) - the membrane proton channel. In yeast, the dimeric form of ATP synthase consists of 17 polypeptides: alpha, beta, gamma, delta, epsilon, 4 (B), 5 (OSCP), 6 (A), 8, 9 (C), d, E (Tim11), f, g, h, i/j and k.

It localises to the mitochondrion inner membrane. Functionally, mitochondrial membrane ATP synthase (F(1)F(0) ATP synthase or Complex V) produces ATP from ADP in the presence of a proton gradient across the membrane which is generated by electron transport complexes of the respiratory chain. F-type ATPases consist of two structural domains, F(1) - containing the extramembraneous catalytic core and F(0) - containing the membrane proton channel, linked together by a central stalk and a peripheral stalk. During catalysis, ATP synthesis in the catalytic domain of F(1) is coupled via a rotary mechanism of the central stalk subunits to proton translocation. Key component of the proton channel; it may play a direct role in the translocation of protons across the membrane. This chain is ATP synthase subunit a (ATP6), found in Saccharomyces cerevisiae (strain ATCC 204508 / S288c) (Baker's yeast).